The following is a 558-amino-acid chain: Potassium-transporting ATPase potassium-binding subunit (558 aa).

Transmembrane regions (helical) follow at residues 1–21 (MEIILFLTMMVMIAYVFSGYL), 66–86 (FNGFMGLITFVLLIVQQWLFL), 127–147 (MIVMTYLMFTSSASGYAVCIA), 166–186 (IVRFIVRVLLPLSCLISILLM), 245–265 (IWSDFIEMGSMMLLPMSMLFL), 281–301 (ALILFVAMFFIFIAILTLTMW), 327–347 (FGAGLSALFTVITTAFTTGSV), 354–374 (LTPLGGLGPMVLMMLNVVFGG), 377–397 (VGLMNLLIYVLLTVFICSLMV), 416–436 (IVLVFLIHPILILVFSALAFM), 482–502 (ISTGIIMLLSRYIPIILQLLI), and 531–551 (IVFIVLLSGLTFIPVLLLGPI).

The protein belongs to the KdpA family. The system is composed of three essential subunits: KdpA, KdpB and KdpC.

The protein resides in the cell membrane. Part of the high-affinity ATP-driven potassium transport (or Kdp) system, which catalyzes the hydrolysis of ATP coupled with the electrogenic transport of potassium into the cytoplasm. This subunit binds the extracellular potassium ions and delivers the ions to the membrane domain of KdpB through an intramembrane tunnel. This chain is Potassium-transporting ATPase potassium-binding subunit, found in Staphylococcus aureus (strain bovine RF122 / ET3-1).